We begin with the raw amino-acid sequence, 217 residues long: Probable transaldolase (217 aa).

K83 acts as the Schiff-base intermediate with substrate in catalysis.

The protein belongs to the transaldolase family. Type 3B subfamily.

Its subcellular location is the cytoplasm. The enzyme catalyses D-sedoheptulose 7-phosphate + D-glyceraldehyde 3-phosphate = D-erythrose 4-phosphate + beta-D-fructose 6-phosphate. It functions in the pathway carbohydrate degradation; pentose phosphate pathway; D-glyceraldehyde 3-phosphate and beta-D-fructose 6-phosphate from D-ribose 5-phosphate and D-xylulose 5-phosphate (non-oxidative stage): step 2/3. Its function is as follows. Transaldolase is important for the balance of metabolites in the pentose-phosphate pathway. The protein is Probable transaldolase of Sinorhizobium medicae (strain WSM419) (Ensifer medicae).